The sequence spans 381 residues: Chymosin (381 aa).

The signal sequence occupies residues 1–16; that stretch reads MRGFVVLLAVFALSQA. Residues 17–58 constitute a propeptide, activation peptide; that stretch reads SGIVRIPLHKGKSLRRALKERGLLEDFLKNHQHAVSRKHSNS. Positions 74-378 constitute a Peptidase A1 domain; it reads YFGKIYIGTP…DRASNLVGLA (305 aa). The active site involves Asp92. The stretch at 92 to 102 is repeat 1; the sequence is DTGSSDLWVPS. 2 cysteine pairs are disulfide-bonded: Cys105–Cys110 and Cys265–Cys269. Asp274 is an active-site residue. Copy 2 of the repeat occupies 274-284; that stretch reads DTGTSMLVGPG. An intrachain disulfide couples Cys308 to Cys341.

Belongs to the peptidase A1 family. Monomer.

It carries out the reaction Broad specificity similar to that of pepsin A. Clots milk by cleavage of a single 104-Ser-Phe-|-Met-Ala-107 bond in kappa-chain of casein.. Inhibited by pepstatin. Functionally, hydrolyzes a variety of proteins. The chain is Chymosin (CYM) from Callithrix jacchus (White-tufted-ear marmoset).